Consider the following 72-residue polypeptide: Gene 42 protein (72 aa).

The polypeptide is Gene 42 protein (42) (Mycobacterium phage L5 (Mycobacteriophage L5)).